A 601-amino-acid chain; its full sequence is Glutamine--fructose-6-phosphate aminotransferase [isomerizing] (601 aa).

Cys2 (nucleophile; for GATase activity) is an active-site residue. The 217-residue stretch at 2–218 (CGIVGYIGYD…DHEIVIVKKD (217 aa)) folds into the Glutamine amidotransferase type-2 domain. 2 consecutive SIS domains span residues 284 to 423 (IIND…EHGR) and 453 to 591 (IATD…VDKP). The active-site For Fru-6P isomerization activity is Lys596.

Homodimer.

It localises to the cytoplasm. It carries out the reaction D-fructose 6-phosphate + L-glutamine = D-glucosamine 6-phosphate + L-glutamate. Catalyzes the first step in hexosamine metabolism, converting fructose-6P into glucosamine-6P using glutamine as a nitrogen source. This is Glutamine--fructose-6-phosphate aminotransferase [isomerizing] from Staphylococcus aureus (strain MRSA252).